Here is a 125-residue protein sequence, read N- to C-terminus: S-adenosylmethionine decarboxylase proenzyme (125 aa).

Ser71 (schiff-base intermediate with substrate; via pyruvic acid) is an active-site residue. Ser71 is subject to Pyruvic acid (Ser); by autocatalysis. The Proton acceptor; for processing activity role is filled by His76. Catalysis depends on Cys91, which acts as the Proton donor; for catalytic activity.

Belongs to the prokaryotic AdoMetDC family. Type 1 subfamily. Heterotetramer of two alpha and two beta chains arranged as a dimer of alpha/beta heterodimers. Requires pyruvate as cofactor. In terms of processing, is synthesized initially as an inactive proenzyme. Formation of the active enzyme involves a self-maturation process in which the active site pyruvoyl group is generated from an internal serine residue via an autocatalytic post-translational modification. Two non-identical subunits are generated from the proenzyme in this reaction, and the pyruvate is formed at the N-terminus of the alpha chain, which is derived from the carboxyl end of the proenzyme. The post-translation cleavage follows an unusual pathway, termed non-hydrolytic serinolysis, in which the side chain hydroxyl group of the serine supplies its oxygen atom to form the C-terminus of the beta chain, while the remainder of the serine residue undergoes an oxidative deamination to produce ammonia and the pyruvoyl group blocking the N-terminus of the alpha chain.

The catalysed reaction is S-adenosyl-L-methionine + H(+) = S-adenosyl 3-(methylsulfanyl)propylamine + CO2. It functions in the pathway amine and polyamine biosynthesis; S-adenosylmethioninamine biosynthesis; S-adenosylmethioninamine from S-adenosyl-L-methionine: step 1/1. Its function is as follows. Catalyzes the decarboxylation of S-adenosylmethionine to S-adenosylmethioninamine (dcAdoMet), the propylamine donor required for the synthesis of the polyamines spermine and spermidine from the diamine putrescine. The polypeptide is S-adenosylmethionine decarboxylase proenzyme (Pyrobaculum arsenaticum (strain DSM 13514 / JCM 11321 / PZ6)).